The chain runs to 715 residues: Putative membrane protein IgaA homolog (715 aa).

The next 5 membrane-spanning stretches (helical) occupy residues 2-22, 214-234, 235-255, 349-369, and 663-683; these read STIV…GLLW, EACA…GPTV, TLPW…WYLF, NLTL…YVPL, and ATSL…VLLI.

It belongs to the IgaA family.

It is found in the cell inner membrane. In Yersinia pestis, this protein is Putative membrane protein IgaA homolog.